The chain runs to 309 residues: MEVLLGVKIGCLLALLVLTLGCGLTPIYVKWFQMDAATGHHHRVLSLLGCTSAGVFLGAGLMHMTAEALEGIESEIQKFVEQNSTGSKGNSSRDAASSYVEYPYGELVISLGFFFVFLLESLALQCCHGAAGGSTVQEEEWGGTHAFGFHKHPAVPSPSRGPLRALVLLLSLSFHSVFEGLAVGLQATVAATIQLCVAVLAHKGLVVFSVGLRLGKIGTGPRWATFCILSLALMSPVGLALGLTVAGGASGQTQGLAQAVLEGIAAGTFLYVTFLEILPRELACPEAPLAKYSCVAAGFAFMALIALWA.

At 1–8 the chain is on the extracellular side; the sequence is MEVLLGVK. A helical transmembrane segment spans residues 9–29; the sequence is IGCLLALLVLTLGCGLTPIYV. Residues 30–43 lie on the Cytoplasmic side of the membrane; the sequence is KWFQMDAATGHHHR. Residues 44-64 traverse the membrane as a helical segment; sequence VLSLLGCTSAGVFLGAGLMHM. Residues 65–103 are Extracellular-facing; the sequence is TAEALEGIESEIQKFVEQNSTGSKGNSSRDAASSYVEYP. A helical transmembrane segment spans residues 104-124; the sequence is YGELVISLGFFFVFLLESLAL. Over 125–164 the chain is Cytoplasmic; it reads QCCHGAAGGSTVQEEEWGGTHAFGFHKHPAVPSPSRGPLR. A helical membrane pass occupies residues 165-185; that stretch reads ALVLLLSLSFHSVFEGLAVGL. Positions 175 and 179 each coordinate Zn(2+). The Extracellular segment spans residues 186-191; that stretch reads QATVAA. A helical membrane pass occupies residues 192 to 212; that stretch reads TIQLCVAVLAHKGLVVFSVGL. Residue His-202 participates in Zn(2+) binding. The Cytoplasmic segment spans residues 213-225; it reads RLGKIGTGPRWAT. The chain crosses the membrane as a helical span at residues 226-246; that stretch reads FCILSLALMSPVGLALGLTVA. Residues 247–258 lie on the Extracellular side of the membrane; the sequence is GGASGQTQGLAQ. The chain crosses the membrane as a helical span at residues 259–279; it reads AVLEGIAAGTFLYVTFLEILP. Glu-276 lines the Zn(2+) pocket. At 280–288 the chain is on the cytoplasmic side; sequence RELACPEAP. Residues 289 to 309 form a helical membrane-spanning segment; that stretch reads LAKYSCVAAGFAFMALIALWA.

This sequence belongs to the ZIP transporter (TC 2.A.5) family. As to expression, high expression in the liver, skin and ovary.

Its subcellular location is the cell membrane. It carries out the reaction Zn(2+)(in) = Zn(2+)(out). The enzyme catalyses Cd(2+)(in) = Cd(2+)(out). In terms of biological role, transporter for the divalent cation Zn(2+). Mediates the influx of Zn(2+) into cells from extracellular space. The Zn(2+) uniporter activity is independent of H(+)-driving force, but is modulated by extracellular pH and membrane potential. Transports also other divalent cations Zn(2+), Cd2(+), Cu2(+), Co2(+) in the order of decreasing affinity, respectively. In the skin, aids in the differentiation of keratinocytes in the epidermis. The polypeptide is Zinc transporter ZIP2 (Slc39a2) (Mus musculus (Mouse)).